The chain runs to 175 residues: MEIDKNVDTLSEGQVDELIKKNIIMTSLEAVFNWARGNSLWPLSSGLACCAIEMMATGASRFDMARFGYEVFRPSPRQADLIIIAGTLTWKMAPAIQRVYEQMPEPKWIIAMGSCACTGGPFADSYAVVPGVDKVIPVDVYVPGCPPRPEALLDGFLKLKAKIQNPAKVGLKHGK.

[4Fe-4S] cluster is bound by residues Cys-49, Cys-50, Cys-115, and Cys-145.

It belongs to the complex I 20 kDa subunit family. NDH-1 is composed of 14 different subunits. Subunits NuoB, C, D, E, F, and G constitute the peripheral sector of the complex. It depends on [4Fe-4S] cluster as a cofactor.

It localises to the cell membrane. The catalysed reaction is a quinone + NADH + 5 H(+)(in) = a quinol + NAD(+) + 4 H(+)(out). Its function is as follows. NDH-1 shuttles electrons from NADH, via FMN and iron-sulfur (Fe-S) centers, to quinones in the respiratory chain. The immediate electron acceptor for the enzyme in this species is believed to be a menaquinone. Couples the redox reaction to proton translocation (for every two electrons transferred, four hydrogen ions are translocated across the cytoplasmic membrane), and thus conserves the redox energy in a proton gradient. The sequence is that of NADH-quinone oxidoreductase subunit B from Heliobacterium modesticaldum (strain ATCC 51547 / Ice1).